A 338-amino-acid chain; its full sequence is Ketol-acid reductoisomerase (NADP(+)) (338 aa).

The region spanning Met1–Thr181 is the KARI N-terminal Rossmann domain. Residues Tyr24–Gln27, Arg47, Ser50, Ser52, and Asp82–Gln85 each bind NADP(+). His107 is a catalytic residue. Gly133 is a binding site for NADP(+). The region spanning Thr182–Ile327 is the KARI C-terminal knotted domain. Asp190, Glu194, Glu226, and Glu230 together coordinate Mg(2+). Ser251 lines the substrate pocket.

Belongs to the ketol-acid reductoisomerase family. Mg(2+) is required as a cofactor.

The enzyme catalyses (2R)-2,3-dihydroxy-3-methylbutanoate + NADP(+) = (2S)-2-acetolactate + NADPH + H(+). It carries out the reaction (2R,3R)-2,3-dihydroxy-3-methylpentanoate + NADP(+) = (S)-2-ethyl-2-hydroxy-3-oxobutanoate + NADPH + H(+). The protein operates within amino-acid biosynthesis; L-isoleucine biosynthesis; L-isoleucine from 2-oxobutanoate: step 2/4. It functions in the pathway amino-acid biosynthesis; L-valine biosynthesis; L-valine from pyruvate: step 2/4. Functionally, involved in the biosynthesis of branched-chain amino acids (BCAA). Catalyzes an alkyl-migration followed by a ketol-acid reduction of (S)-2-acetolactate (S2AL) to yield (R)-2,3-dihydroxy-isovalerate. In the isomerase reaction, S2AL is rearranged via a Mg-dependent methyl migration to produce 3-hydroxy-3-methyl-2-ketobutyrate (HMKB). In the reductase reaction, this 2-ketoacid undergoes a metal-dependent reduction by NADPH to yield (R)-2,3-dihydroxy-isovalerate. This chain is Ketol-acid reductoisomerase (NADP(+)), found in Thiobacillus denitrificans (strain ATCC 25259 / T1).